Consider the following 105-residue polypeptide: Cell division protein FtsB (105 aa).

At 1-3 (MRL) the chain is on the cytoplasmic side. Residues 4 to 21 (FTLILMVVLALVQRQLWF) form a helical membrane-spanning segment. The Periplasmic segment spans residues 22-105 (GKNGLVEYRQ…NKQSSLPKSD (84 aa)). Residues 28–74 (EYRQVSENLLRRQADNQKLQERNMLLKEDIEDLKSGLEAIEELARND) are a coiled coil.

It belongs to the FtsB family. In terms of assembly, part of a complex composed of FtsB, FtsL and FtsQ.

It is found in the cell inner membrane. In terms of biological role, essential cell division protein. May link together the upstream cell division proteins, which are predominantly cytoplasmic, with the downstream cell division proteins, which are predominantly periplasmic. In Tolumonas auensis (strain DSM 9187 / NBRC 110442 / TA 4), this protein is Cell division protein FtsB.